We begin with the raw amino-acid sequence, 367 residues long: Putative zinc metalloprotease mll0638 (367 aa).

Residue His-20 participates in Zn(2+) binding. Residue Glu-21 is part of the active site. His-24 provides a ligand contact to Zn(2+). The next 3 membrane-spanning stretches (helical) occupy residues 108 to 130 (ATVV…VLFA), 291 to 313 (LGFE…LNLL), and 343 to 365 (MAYR…NDLF). Residues 121–196 (TIVVFSVLFA…ITFVMLRDGK (76 aa)) enclose the PDZ domain.

Belongs to the peptidase M50B family. It depends on Zn(2+) as a cofactor.

It localises to the cell inner membrane. The polypeptide is Putative zinc metalloprotease mll0638 (Mesorhizobium japonicum (strain LMG 29417 / CECT 9101 / MAFF 303099) (Mesorhizobium loti (strain MAFF 303099))).